We begin with the raw amino-acid sequence, 185 residues long: Probable RNA 2'-phosphotransferase (185 aa).

This sequence belongs to the KptA/TPT1 family.

Its function is as follows. Removes the 2'-phosphate from RNA via an intermediate in which the phosphate is ADP-ribosylated by NAD followed by a presumed transesterification to release the RNA and generate ADP-ribose 1''-2''-cyclic phosphate (APPR&gt;P). May function as an ADP-ribosylase. This Bacillus thuringiensis subsp. konkukian (strain 97-27) protein is Probable RNA 2'-phosphotransferase.